The chain runs to 296 residues: L-fucono-1,5-lactonase (296 aa).

The protein belongs to the metallo-dependent hydrolases superfamily. As to quaternary structure, monomer. The cofactor is Does not require a divalent metal for activity. The purified enzyme contains Zn(2+), but the addition of chelators does not diminish the catalytic activity of the enzyme, indicating that it does not require a divalent cation for substrate turnover..

It catalyses the reaction L-fucono-1,5-lactone + H2O = L-fuconate + H(+). The enzyme catalyses L-fucono-1,4-lactone + H2O = L-fuconate + H(+). The catalysed reaction is D-arabinono-1,4-lactone + H2O = D-arabinonate + H(+). It carries out the reaction L-xylono-1,4-lactone + H2O = L-xylonate + H(+). It catalyses the reaction L-galactono-1,4-lactone + H2O = L-galactonate + H(+). The protein operates within carbohydrate degradation; L-fucose degradation. In terms of biological role, L-fucono-1,5-lactonase involved in an L-fucose degradation pathway. Catalyzes the hydrolysis of L-fucono-1,5-lactone to L-fuconate. L-fucono-1,5-lactone is the best substrate, but the enzyme can also hydrolyze L-fucono-1,4-lactone, L-galactono-1,4-lactone D-arabinono-1,4-lactone and L-xylono-1,4-lactone. This chain is L-fucono-1,5-lactonase, found in Burkholderia multivorans (strain ATCC 17616 / 249).